The following is an 85-amino-acid chain: MTDKIRSVQGKVVSDKMDKSFVVAIERKVKHPLYGKFIRRTTKLHVHDENNEAKLGDIVEIKECRPLSKTKSWTLVRVVEKAVVA.

It belongs to the universal ribosomal protein uS17 family. As to quaternary structure, part of the 30S ribosomal subunit.

One of the primary rRNA binding proteins, it binds specifically to the 5'-end of 16S ribosomal RNA. This is Small ribosomal subunit protein uS17 from Pasteurella multocida (strain Pm70).